The sequence spans 403 residues: RNA-binding motif, single-stranded-interacting protein 1 (403 aa).

Residues 30-56 (PAHPMAPPSPSTTSSNNNSSSSSNSGW) are disordered. Positions 40-54 (STTSSNNNSSSSSNS) are enriched in low complexity. RRM domains lie at 62 to 135 (TNLY…MAKQ) and 141 to 226 (TNLY…FADG). Thr-208 carries the phosphothreonine modification. A compositionally biased stretch (polar residues) spans 382–395 (GQQQVAVETSNDHS). Residues 382–403 (GQQQVAVETSNDHSPYTFPPNK) are disordered.

In terms of tissue distribution, ubiquitous. Expressed in all tissues except testis.

Its subcellular location is the nucleus. Single-stranded DNA binding protein that interacts with the region upstream of the MYC gene. Binds specifically to the DNA sequence motif 5'-[AT]CT[AT][AT]T-3'. Probably has a role in DNA replication. This is RNA-binding motif, single-stranded-interacting protein 1 (Rbms1) from Mus musculus (Mouse).